The following is a 549-amino-acid chain: uncharacterized protein (549 aa).

An N-terminal signal peptide occupies residues 1–19; that stretch reads MNWRRIVWLLALVTLPTLA.

This is an uncharacterized protein from Escherichia coli (strain K12).